A 938-amino-acid chain; its full sequence is Isoleucine--tRNA ligase (938 aa).

The 'HIGH' region motif lies at 58–68 (PYANGNIHIGH). E562 serves as a coordination point for L-isoleucyl-5'-AMP. Positions 603-607 (KMSKS) match the 'KMSKS' region motif. K606 is an ATP binding site. Residues C901, C904, C921, and C924 each coordinate Zn(2+).

Belongs to the class-I aminoacyl-tRNA synthetase family. IleS type 1 subfamily. Monomer. It depends on Zn(2+) as a cofactor.

It is found in the cytoplasm. The enzyme catalyses tRNA(Ile) + L-isoleucine + ATP = L-isoleucyl-tRNA(Ile) + AMP + diphosphate. Functionally, catalyzes the attachment of isoleucine to tRNA(Ile). As IleRS can inadvertently accommodate and process structurally similar amino acids such as valine, to avoid such errors it has two additional distinct tRNA(Ile)-dependent editing activities. One activity is designated as 'pretransfer' editing and involves the hydrolysis of activated Val-AMP. The other activity is designated 'posttransfer' editing and involves deacylation of mischarged Val-tRNA(Ile). This chain is Isoleucine--tRNA ligase, found in Actinobacillus pleuropneumoniae serotype 5b (strain L20).